The following is a 922-amino-acid chain: Translation initiation factor IF-2 (922 aa).

The disordered stretch occupies residues 243 to 329; the sequence is AAREAAKLAE…GKSKSGQEET (87 aa). Positions 250-264 are enriched in low complexity; that stretch reads LAEAQKAAAPAPAAP. Residues 267–298 are compositionally biased toward basic and acidic residues; sequence KTLHKPDKPAAAKGAKGPDKKPAGAWKDDAAR. The tr-type G domain maps to 422 to 589; that stretch reads ARPPVVTVMG…AILLQAEVLE (168 aa). The interval 431–438 is G1; it reads GHVDHGKT. GTP is bound at residue 431 to 438; the sequence is GHVDHGKT. The G2 stretch occupies residues 456-460; it reads GITQH. The G3 stretch occupies residues 477 to 480; sequence DTPG. Residues 477–481 and 531–534 contribute to the GTP site; these read DTPGH and NKID. The tract at residues 531-534 is G4; that stretch reads NKID. Residues 567–569 are G5; sequence SAK.

The protein belongs to the TRAFAC class translation factor GTPase superfamily. Classic translation factor GTPase family. IF-2 subfamily.

The protein localises to the cytoplasm. Functionally, one of the essential components for the initiation of protein synthesis. Protects formylmethionyl-tRNA from spontaneous hydrolysis and promotes its binding to the 30S ribosomal subunits. Also involved in the hydrolysis of GTP during the formation of the 70S ribosomal complex. The protein is Translation initiation factor IF-2 of Thiobacillus denitrificans (strain ATCC 25259 / T1).